The chain runs to 248 residues: Biosynthetic peptidoglycan transglycosylase (248 aa).

A helical transmembrane segment spans residues 17–37; that stretch reads LLIFFFASTILAVIVYRFMPV.

Belongs to the glycosyltransferase 51 family.

The protein resides in the cell inner membrane. The enzyme catalyses [GlcNAc-(1-&gt;4)-Mur2Ac(oyl-L-Ala-gamma-D-Glu-L-Lys-D-Ala-D-Ala)](n)-di-trans,octa-cis-undecaprenyl diphosphate + beta-D-GlcNAc-(1-&gt;4)-Mur2Ac(oyl-L-Ala-gamma-D-Glu-L-Lys-D-Ala-D-Ala)-di-trans,octa-cis-undecaprenyl diphosphate = [GlcNAc-(1-&gt;4)-Mur2Ac(oyl-L-Ala-gamma-D-Glu-L-Lys-D-Ala-D-Ala)](n+1)-di-trans,octa-cis-undecaprenyl diphosphate + di-trans,octa-cis-undecaprenyl diphosphate + H(+). It participates in cell wall biogenesis; peptidoglycan biosynthesis. Its function is as follows. Peptidoglycan polymerase that catalyzes glycan chain elongation from lipid-linked precursors. The chain is Biosynthetic peptidoglycan transglycosylase from Bacteroides thetaiotaomicron (strain ATCC 29148 / DSM 2079 / JCM 5827 / CCUG 10774 / NCTC 10582 / VPI-5482 / E50).